We begin with the raw amino-acid sequence, 733 residues long: Polyribonucleotide nucleotidyltransferase (733 aa).

Residues D489 and D495 each coordinate Mg(2+). The KH domain occupies 556 to 615; the sequence is PKIDTIKIDVDKIKIVIGKGGETIDKIIAETGVKIDIDEEGNVSIYSSDQDAINRAKEII. Residues 625–693 form the S1 motif domain; it reads DEVYHAKVVR…AKGRVDASMK (69 aa). Residues 691 to 733 form a disordered region; that stretch reads SMKVLLPRPPKSDKPKHHHDKGHHPHKEYKGHKDHQESPKTEE. Basic residues predominate over residues 704 to 723; the sequence is KPKHHHDKGHHPHKEYKGHK. Residues 724-733 are compositionally biased toward basic and acidic residues; the sequence is DHQESPKTEE.

Belongs to the polyribonucleotide nucleotidyltransferase family. The cofactor is Mg(2+).

The protein resides in the cytoplasm. It carries out the reaction RNA(n+1) + phosphate = RNA(n) + a ribonucleoside 5'-diphosphate. Its function is as follows. Involved in mRNA degradation. Catalyzes the phosphorolysis of single-stranded polyribonucleotides processively in the 3'- to 5'-direction. The chain is Polyribonucleotide nucleotidyltransferase from Streptococcus sanguinis (strain SK36).